The sequence spans 411 residues: Tyrosine--tRNA ligase (411 aa).

Y34 provides a ligand contact to L-tyrosine. The 'HIGH' region motif lies at 39-48 (CTATSLHIGS). L-tyrosine is bound by residues Y171 and Q175. A 'KMSKS' region motif is present at residues 231 to 235 (KMGKT). K234 serves as a coordination point for ATP. In terms of domain architecture, S4 RNA-binding spans 345 to 411 (ISAYELFHEA…GKKKHILVRV (67 aa)).

It belongs to the class-I aminoacyl-tRNA synthetase family. TyrS type 1 subfamily. In terms of assembly, homodimer.

It localises to the cytoplasm. The enzyme catalyses tRNA(Tyr) + L-tyrosine + ATP = L-tyrosyl-tRNA(Tyr) + AMP + diphosphate + H(+). In terms of biological role, catalyzes the attachment of tyrosine to tRNA(Tyr) in a two-step reaction: tyrosine is first activated by ATP to form Tyr-AMP and then transferred to the acceptor end of tRNA(Tyr). This Rickettsia conorii (strain ATCC VR-613 / Malish 7) protein is Tyrosine--tRNA ligase.